Consider the following 289-residue polypeptide: ATP synthase subunit a (289 aa).

6 helical membrane-spanning segments follow: residues 43 to 63, 103 to 123, 160 to 180, 193 to 213, 232 to 252, and 259 to 279; these read AFHLDTLGWSVALGLIFLLIF, VIAPLALTIFVWVFLMNAVDL, FCVFALIIFYSIKVKGLGGFI, IFVQILLIPVNFLLEFVTLIA, VFILIAVMFGSGLLWLSGLGV, and AVFHILIITLQAFIFMMLTIV.

This sequence belongs to the ATPase A chain family. F-type ATPases have 2 components, CF(1) - the catalytic core - and CF(0) - the membrane proton channel. CF(1) has five subunits: alpha(3), beta(3), gamma(1), delta(1), epsilon(1). CF(0) has three main subunits: a(1), b(2) and c(9-12). The alpha and beta chains form an alternating ring which encloses part of the gamma chain. CF(1) is attached to CF(0) by a central stalk formed by the gamma and epsilon chains, while a peripheral stalk is formed by the delta and b chains.

It is found in the cell inner membrane. Key component of the proton channel; it plays a direct role in the translocation of protons across the membrane. The sequence is that of ATP synthase subunit a from Pseudomonas putida (strain ATCC 700007 / DSM 6899 / JCM 31910 / BCRC 17059 / LMG 24140 / F1).